The chain runs to 394 residues: Elongation factor Tu (394 aa).

A tr-type G domain is found at 10–204 (KPHINVGTIG…YLDTYIPEPK (195 aa)). The G1 stretch occupies residues 19-26 (GHVDHGKT). Position 19-26 (19-26 (GHVDHGKT)) interacts with GTP. Residue T26 participates in Mg(2+) binding. Residues 60 to 64 (GITIN) are G2. Residues 81-84 (DCPG) are G3. GTP-binding positions include 81–85 (DCPGH) and 136–139 (NKCD). Residues 136-139 (NKCD) form a G4 region. Residues 174 to 176 (SAL) are G5.

This sequence belongs to the TRAFAC class translation factor GTPase superfamily. Classic translation factor GTPase family. EF-Tu/EF-1A subfamily. As to quaternary structure, monomer.

The protein resides in the cytoplasm. The enzyme catalyses GTP + H2O = GDP + phosphate + H(+). In terms of biological role, GTP hydrolase that promotes the GTP-dependent binding of aminoacyl-tRNA to the A-site of ribosomes during protein biosynthesis. This Buchnera aphidicola subsp. Baizongia pistaciae (strain Bp) protein is Elongation factor Tu.